The primary structure comprises 1516 residues: Myosin-52 (1516 aa).

Positions 7 to 62 (YKGLQCWIPDEQSQWIPGSIKDCRVEGEKAFLTVQDENENETVITVKPDDLNYEGR) constitute a Myosin N-terminal SH3-like domain. The Myosin motor domain occupies 73-766 (SDADDLTDLS…VTPLLESARD (694 aa)). An ATP-binding site is contributed by 167–174 (GESGAGKT). The actin-binding stretch occupies residues 647–669 (LVSLMSTINETNAHYIRCIKPNE). 5 consecutive IQ domains span residues 793-813 (RKRVRSFQAVAHGFLSRRHTE), 818-838 (SSNIIKLQSLWRTALKRKEFI), 840-865 (TKNSILKVQSIIRGFLLRQTLEEKTK), 866-886 (HDATLIIQSLWLTFKAHKHYK), and 888-917 (LQYYAVRIQSLWRMKLAKRQLTELKIESTK). A coiled-coil region spans residues 926 to 1034 (YRLESRLFEI…LKSQLKNYDM (109 aa)). Phosphoserine occurs at positions 1065 and 1072. The Dilute domain maps to 1163–1431 (ERYCVHTLEY…SELSKNIVAE (269 aa)).

It belongs to the TRAFAC class myosin-kinesin ATPase superfamily. Myosin family.

It localises to the cytoplasm. Involved in cell wall deposition where it has a role in the localization of mok1. This Schizosaccharomyces pombe (strain 972 / ATCC 24843) (Fission yeast) protein is Myosin-52 (myo52).